A 99-amino-acid chain; its full sequence is Elongin-C (99 aa).

Serine 2 is modified (N-acetylserine). Serine 2 is modified (phosphoserine).

This sequence belongs to the SKP1 family. In terms of assembly, heterodimer with ELA1. Component of a CRL3 E3 ubiquitin ligase complex consisting of the cullin CUL3, the linker protein ELC1, the substrate receptor ELA1, and the RING protein HRT1. Interacts with CIN5. Interacts with PCL6. Interacts with SNF4. Interacts with the large RNA polymerase II subunit RPO21 in a manner dependent on DEF1. Interacts with DEF1. Interacts with RAD7. Interacts with RAD16.

Its subcellular location is the cytoplasm. The protein localises to the nucleus. As part of the CRL3 E3 ubiquitin ligase complex; polyubiquitylates monoubiquitylated RNA polymerase II subunit RPO21 to trigger its proteolysis; plays a role in global genomic repair. Prevents degradation of interacting proteins like PCL6 by the proteasome. The chain is Elongin-C (ELC1) from Saccharomyces cerevisiae (strain ATCC 204508 / S288c) (Baker's yeast).